The sequence spans 291 residues: Ribosome maturation factor RimP (291 aa).

The segment at 188 to 291 (ERGLGEDEEF…GGKPKAKETH (104 aa)) is disordered. Residues 193–211 (EDEEFEDDADEVFEGDEAD) show a composition bias toward acidic residues. Basic and acidic residues-rich tracts occupy residues 212–237 (EKAA…EKRA) and 245–254 (AKSEKAEKSQ).

This sequence belongs to the RimP family.

Its subcellular location is the cytoplasm. Required for maturation of 30S ribosomal subunits. The protein is Ribosome maturation factor RimP of Azorhizobium caulinodans (strain ATCC 43989 / DSM 5975 / JCM 20966 / LMG 6465 / NBRC 14845 / NCIMB 13405 / ORS 571).